A 206-amino-acid polypeptide reads, in one-letter code: Methylthioribulose-1-phosphate dehydratase (206 aa).

The Zn(2+) site is built by histidine 96 and histidine 98.

It belongs to the aldolase class II family. MtnB subfamily. Requires Zn(2+) as cofactor.

The catalysed reaction is 5-(methylsulfanyl)-D-ribulose 1-phosphate = 5-methylsulfanyl-2,3-dioxopentyl phosphate + H2O. Its pathway is amino-acid biosynthesis; L-methionine biosynthesis via salvage pathway; L-methionine from S-methyl-5-thio-alpha-D-ribose 1-phosphate: step 2/6. Functionally, catalyzes the dehydration of methylthioribulose-1-phosphate (MTRu-1-P) into 2,3-diketo-5-methylthiopentyl-1-phosphate (DK-MTP-1-P). The chain is Methylthioribulose-1-phosphate dehydratase from Exiguobacterium sibiricum (strain DSM 17290 / CCUG 55495 / CIP 109462 / JCM 13490 / 255-15).